Reading from the N-terminus, the 303-residue chain is MSATPTVPITFQGLIQTLNQFWAQQGCVLIQPLDLEVGAGTFHPATFLRAIGPESWNAAYVQPSRRPTDGRYGENPNRLQRYYQYQVAMKPAPDNIQQLYLDSLKALGIDPLVHDLRFVEDNWESPTLGAWGLGWEVWLNGMEVTQFTYFQQAGGLECRPVLGEITYGLERLCMYLQNCDNVYDLVWTYGPDGQPVTYGDVYHQNEVEQSTYNFEYADVEEMFHRFDACEREAQKLVEVNLPLPAYEQVMKASHTFNLLDARRAISVTERQRYILRVRALAQAVAKAYYEQREKLGFPGAKKA.

Belongs to the class-II aminoacyl-tRNA synthetase family. As to quaternary structure, tetramer of two alpha and two beta subunits.

The protein resides in the cytoplasm. The enzyme catalyses tRNA(Gly) + glycine + ATP = glycyl-tRNA(Gly) + AMP + diphosphate. The sequence is that of Glycine--tRNA ligase alpha subunit from Stenotrophomonas maltophilia (strain R551-3).